The sequence spans 271 residues: GPN-loop GTPase 3 (271 aa).

Gly-13 to Thr-18 lines the GTP pocket. A Gly-Pro-Asn (GPN)-loop; involved in dimer interface motif is present at residues Gly-70 to Asn-72. Ser-173–Asp-176 serves as a coordination point for GTP.

This sequence belongs to the GPN-loop GTPase family. Heterodimers with GPN1 or GPN2. Binds to RNA polymerase II (RNAPII).

In terms of biological role, small GTPase required for proper nuclear import of RNA polymerase II and III (RNAPII and RNAPIII). May act at an RNAP assembly step prior to nuclear import. The polypeptide is GPN-loop GTPase 3 (Candida glabrata (strain ATCC 2001 / BCRC 20586 / JCM 3761 / NBRC 0622 / NRRL Y-65 / CBS 138) (Yeast)).